We begin with the raw amino-acid sequence, 378 residues long: UPF0754 membrane protein BCE33L0760 (378 aa).

Helical transmembrane passes span M1–T21 and Y357–L377.

Belongs to the UPF0754 family.

Its subcellular location is the cell membrane. The protein is UPF0754 membrane protein BCE33L0760 of Bacillus cereus (strain ZK / E33L).